A 245-amino-acid polypeptide reads, in one-letter code: Bis(5'-nucleosyl)-tetraphosphatase PrpE [asymmetrical] (245 aa).

Belongs to the PrpE family. The cofactor is Ni(2+).

It catalyses the reaction P(1),P(4)-bis(5'-guanosyl) tetraphosphate + H2O = GMP + GTP + 2 H(+). In terms of biological role, asymmetrically hydrolyzes Ap4p to yield AMP and ATP. The protein is Bis(5'-nucleosyl)-tetraphosphatase PrpE [asymmetrical] of Geobacillus sp. (strain WCH70).